An 837-amino-acid polypeptide reads, in one-letter code: Periplasmic nitrate reductase (837 aa).

Residues 1–33 (MTTPKLDRRQVLKLEAAAMAALAGGIAMPAAAA) constitute a signal peptide (tat-type signal). Residues 44-100 (LKWDKAACRFCGTGCSVMVATKENRVVATHGDTKSEVNRGLNCVKGYFLSKIMYGHD) enclose the 4Fe-4S Mo/W bis-MGD-type domain. Residues Cys51, Cys54, Cys58, and Cys86 each contribute to the [4Fe-4S] cluster site. Residues Lys88, Gln155, Asn180, Cys184, 217–224 (WGSNMAEM), 248–252 (STFEH), 267–269 (QTD), Met378, Gln382, Asn488, 514–515 (SD), Lys537, Asp564, and 724–733 (TGRVLEHWHS) each bind Mo-bis(molybdopterin guanine dinucleotide). Substrate is bound at residue Trp800. Mo-bis(molybdopterin guanine dinucleotide) is bound by residues Asn808 and Lys825.

Belongs to the prokaryotic molybdopterin-containing oxidoreductase family. NasA/NapA/NarB subfamily. Component of the periplasmic nitrate reductase NapAB complex composed of NapA and NapB. It depends on [4Fe-4S] cluster as a cofactor. Mo-bis(molybdopterin guanine dinucleotide) is required as a cofactor. Predicted to be exported by the Tat system. The position of the signal peptide cleavage has not been experimentally proven.

The protein localises to the periplasm. The catalysed reaction is 2 Fe(II)-[cytochrome] + nitrate + 2 H(+) = 2 Fe(III)-[cytochrome] + nitrite + H2O. In terms of biological role, catalytic subunit of the periplasmic nitrate reductase complex NapAB. Receives electrons from NapB and catalyzes the reduction of nitrate to nitrite. This Rhodopseudomonas palustris (strain BisB18) protein is Periplasmic nitrate reductase.